The sequence spans 607 residues: Discoidin-inducing complex subunit B (607 aa).

A signal peptide spans 1 to 19 (MNKKIIILIYLIFIKSIVG). The Extracellular portion of the chain corresponds to 20 to 554 (QNPVWIGGSG…LGTDGISKGS (535 aa)). N-linked (GlcNAc...) asparagine glycans are attached at residues Asn-75, Asn-161, Asn-215, Asn-276, Asn-277, Asn-307, Asn-324, Asn-453, Asn-477, and Asn-527. Residues 555-575 (LAGISVSMVALACFVSLGVWW) traverse the membrane as a helical segment. The Cytoplasmic segment spans residues 576-607 (KTSKKNDQRNDSQVLTNFSQNKSDDIDVERKL).

Forms a complex with psiF/dicA.

The protein localises to the membrane. Its subcellular location is the secreted. Functionally, component of a complex that acts as a quorum sensing protein regulating discoidin gene expression during growth and development. Its function in the complex is unclear as it has no ability to induce discoidin during growth and development by itself. The sequence is that of Discoidin-inducing complex subunit B (dicB) from Dictyostelium discoideum (Social amoeba).